Reading from the N-terminus, the 557-residue chain is 6-phosphofructo-2-kinase/fructose-2,6-bisphosphatase 2 (557 aa).

Residues 1–16 (MSENSTFSTEDSSSSS) are compositionally biased toward low complexity. The tract at residues 1–21 (MSENSTFSTEDSSSSSYKPHA) is disordered. The residue at position 2 (serine 2) is an N-acetylserine. A 6-phosphofructo-2-kinase region spans residues 2–251 (SENSTFSTED…VYYLMNIHVH (250 aa)). Serine 32 is subject to Phosphoserine; by PKA. ATP is bound at residue 48–56 (GLPARGKTY). Residues arginine 81 and arginine 105 each coordinate beta-D-fructose 6-phosphate. Aspartate 131 is a catalytic residue. Residues threonine 133 and arginine 139 each coordinate beta-D-fructose 6-phosphate. Cysteine 161 is a catalytic residue. 170–175 (NILEVK) is a binding site for ATP. Lysine 175, arginine 196, and tyrosine 200 together coordinate beta-D-fructose 6-phosphate. Positions 252 to 557 (PRTIYLCRHG…PSMASLTLLS (306 aa)) are fructose-2,6-bisphosphatase. Arginine 259 serves as a coordination point for beta-D-fructose 2,6-bisphosphate. Histidine 260 acts as the Tele-phosphohistidine intermediate in catalysis. Residues asparagine 266 and glycine 272 each coordinate beta-D-fructose 2,6-bisphosphate. The active-site Proton donor/acceptor is glutamate 329. Tyrosine 340, arginine 354, lysine 358, tyrosine 369, glutamine 395, and arginine 399 together coordinate beta-D-fructose 2,6-bisphosphate. 351 to 354 (FALR) is an ATP binding site. ATP is bound by residues 395–399 (QAVMR) and tyrosine 431. Residues 449–495 (RDKPTHNFPKSQTPVRMRRNSFTPLSSSNTIRRPRNYSVGSRPLKPL) are disordered. Residues 456–479 (FPKSQTPVRMRRNSFTPLSSSNTI) show a composition bias toward polar residues. At serine 469 the chain carries Phosphoserine. Threonine 471 carries the post-translational modification Phosphothreonine. Threonine 478 carries the phosphothreonine; by PKC modification. Phosphoserine occurs at positions 486 and 496.

It in the C-terminal section; belongs to the phosphoglycerate mutase family. Homodimer. Forms a heterodimer with PFKFB3. In terms of processing, phosphorylation by AMPK stimulates activity.

The catalysed reaction is beta-D-fructose 2,6-bisphosphate + H2O = beta-D-fructose 6-phosphate + phosphate. The enzyme catalyses beta-D-fructose 6-phosphate + ATP = beta-D-fructose 2,6-bisphosphate + ADP + H(+). Its activity is regulated as follows. Phosphorylation results in the activation of the kinase activity. Functionally, synthesis and degradation of fructose 2,6-bisphosphate. This is 6-phosphofructo-2-kinase/fructose-2,6-bisphosphatase 2 (Pfkfb2) from Rattus norvegicus (Rat).